The following is a 481-amino-acid chain: Glutamyl-tRNA(Gln) amidotransferase subunit A (481 aa).

Catalysis depends on charge relay system residues Lys74 and Ser149. Residue Ser173 is the Acyl-ester intermediate of the active site.

This sequence belongs to the amidase family. GatA subfamily. In terms of assembly, heterotrimer of A, B and C subunits.

It carries out the reaction L-glutamyl-tRNA(Gln) + L-glutamine + ATP + H2O = L-glutaminyl-tRNA(Gln) + L-glutamate + ADP + phosphate + H(+). Its function is as follows. Allows the formation of correctly charged Gln-tRNA(Gln) through the transamidation of misacylated Glu-tRNA(Gln) in organisms which lack glutaminyl-tRNA synthetase. The reaction takes place in the presence of glutamine and ATP through an activated gamma-phospho-Glu-tRNA(Gln). This chain is Glutamyl-tRNA(Gln) amidotransferase subunit A, found in Francisella tularensis subsp. tularensis (strain WY96-3418).